The following is a 32-amino-acid chain: Hyaluronidase-Pk1a (32 aa).

N23 carries an N-linked (GlcNAc...) asparagine glycan.

It belongs to the glycosyl hydrolase 56 family. Expressed by the venom gland.

The protein resides in the secreted. The catalysed reaction is Random hydrolysis of (1-&gt;4)-linkages between N-acetyl-beta-D-glucosamine and D-glucuronate residues in hyaluronate.. Functionally, hydrolyzes high molecular weight hyaluronic acid to produce small oligosaccharides. In Phoneutria keyserlingi (Brazilian wandering spider), this protein is Hyaluronidase-Pk1a.